The primary structure comprises 305 residues: MARPLKEGLDYFPLDVDADYDDKFQLIETLHGPTGFAIMIKLFMKIYSQNFYYKWTETEQILFAKRVNVDINTLKTVVNDCIKYDLFDNNLFSEFQILTSLGVQERYFTAIGRRKKQIVVLEYLLLDRPEVINLCPKIVFANINVVNDDINAEQEELMPALSAQTKGKESKVNESKAVVSEQEKLPEKIVKEKPTTTAYKFWEENVAITGLSEFDRELLKKLISLGGNELTVHAMKKAIELNRRRMKTVDTVLRGWLDNGVKTTAEADEQEKNWNGGAKKNARAEPAKQEIKISDQYNFGATRTD.

The interval 267–287 (ADEQEKNWNGGAKKNARAEPA) is disordered.

This sequence belongs to the DnaB/DnaD family.

This is an uncharacterized protein from Listeria innocua serovar 6a (strain ATCC BAA-680 / CLIP 11262).